The primary structure comprises 153 residues: MTHDNKLQVEAIKCGTVIDHIPAQVGFKLLSLFKLTETDQRITIGLNLPSGEMGRKDLIKIENTFLTDEQINQLALYAPQATVNRIDNYDVVGKSRPSLPERINNVLVCPNSNCISHAEPVSSSFAVKKRANDIALKCKYCEKEFSHYVVLAN.

Positions 109, 114, 138, and 141 each coordinate Zn(2+).

This sequence belongs to the PyrI family. As to quaternary structure, contains catalytic and regulatory chains. Zn(2+) is required as a cofactor.

Its function is as follows. Involved in allosteric regulation of aspartate carbamoyltransferase. The polypeptide is Aspartate carbamoyltransferase regulatory chain (Salmonella paratyphi A (strain ATCC 9150 / SARB42)).